A 364-amino-acid chain; its full sequence is tRNA/tmRNA (uracil-C(5))-methyltransferase (364 aa).

Positions 188, 216, 221, 237, and 297 each coordinate S-adenosyl-L-methionine. The active-site Nucleophile is the Cys322. Glu356 (proton acceptor) is an active-site residue.

It belongs to the class I-like SAM-binding methyltransferase superfamily. RNA M5U methyltransferase family. TrmA subfamily.

It carries out the reaction uridine(54) in tRNA + S-adenosyl-L-methionine = 5-methyluridine(54) in tRNA + S-adenosyl-L-homocysteine + H(+). It catalyses the reaction uridine(341) in tmRNA + S-adenosyl-L-methionine = 5-methyluridine(341) in tmRNA + S-adenosyl-L-homocysteine + H(+). Dual-specificity methyltransferase that catalyzes the formation of 5-methyluridine at position 54 (m5U54) in all tRNAs, and that of position 341 (m5U341) in tmRNA (transfer-mRNA). The protein is tRNA/tmRNA (uracil-C(5))-methyltransferase of Mannheimia succiniciproducens (strain KCTC 0769BP / MBEL55E).